A 361-amino-acid chain; its full sequence is Nuclear pore complex protein NUP43 (361 aa).

A disordered region spans residues 51–73 (IQSLDPNPRGNHNTNPLIESLSS). WD repeat units lie at residues 132–173 (FHVG…YRKV), 177–215 (NGLV…EAVS), and 225–265 (KTSA…QPIV).

Part of the nuclear pore complex (NPC). The NPC has an eight-fold symmetrical structure comprising a central transport channel and two rings, the cytoplasmic and nuclear rings, to which eight filaments are attached. The cytoplasmic filaments have loose ends, while the nuclear filaments are joined in a distal ring, forming a nuclear basket. NPCs are highly dynamic in configuration and composition, and can be devided in 3 subcomplexes, the NUP62 subcomplex, the NUP107-160 subcomplex and the NUP93 subcomplex, containing approximately 30 different nucleoporin proteins.

Its subcellular location is the nucleus envelope. The protein localises to the nucleus. The protein resides in the nuclear pore complex. The sequence is that of Nuclear pore complex protein NUP43 from Arabidopsis thaliana (Mouse-ear cress).